Consider the following 1712-residue polypeptide: U3 small nucleolar RNA-associated protein 10 (1712 aa).

HEAT repeat units lie at residues 164-202, 490-528, 564-605, 987-1025, 1236-1275, 1605-1646, and 1667-1705; these read EELV…GRGE, TCDF…ASGS, TLLS…PKHG, TQTI…AFEH, VISL…RFGK, EEVT…DSAA, and LGLL…VLGE.

It belongs to the HEATR1/UTP10 family. Component of the ribosomal small subunit (SSU) processome.

The protein localises to the nucleus. It localises to the nucleolus. In terms of biological role, involved in nucleolar processing of pre-18S ribosomal RNA. Involved in ribosome biosynthesis. This is U3 small nucleolar RNA-associated protein 10 from Phaeosphaeria nodorum (strain SN15 / ATCC MYA-4574 / FGSC 10173) (Glume blotch fungus).